The primary structure comprises 330 residues: MQGSVTEFLKPRLVDIEQINTTHAKVTLEPLERGFGHTLGNALRRILLSSMPGCAVTEVEIEGVLHEYSTKEGVQEDILEILLNLKGLAVRVAEGKDEVFITLNKSGSGPVVAGDITHDGDVEIANPEHVICHLTDDNAEIAMRIKVERGRGYVPASARIHTEEDERPIGRLLVDATYSPVDKIAYAVEAARVEQRTDLDKLVIDMETNGTLEPEEAIRRAATILAEQLDAFVDLRDVRVPEEKEEKPEFDPILLRPVDDLELTVRSANCLKAEAIHYIGDLVQRTEVELLKTPNLGKKSLTEIKDVLASRGLSLGMRLENWPPASIAED.

Residues 1–236 (MQGSVTEFLK…EQLDAFVDLR (236 aa)) are alpha N-terminal domain (alpha-NTD). Residues 250–330 (FDPILLRPVD…NWPPASIAED (81 aa)) form an alpha C-terminal domain (alpha-CTD) region.

The protein belongs to the RNA polymerase alpha chain family. In terms of assembly, homodimer. The RNAP catalytic core consists of 2 alpha, 1 beta, 1 beta' and 1 omega subunit. When a sigma factor is associated with the core the holoenzyme is formed, which can initiate transcription.

The catalysed reaction is RNA(n) + a ribonucleoside 5'-triphosphate = RNA(n+1) + diphosphate. In terms of biological role, DNA-dependent RNA polymerase catalyzes the transcription of DNA into RNA using the four ribonucleoside triphosphates as substrates. This is DNA-directed RNA polymerase subunit alpha from Vibrio atlanticus (strain LGP32) (Vibrio splendidus (strain Mel32)).